Consider the following 541-residue polypeptide: Chaperonin GroEL (541 aa).

Residues 29–32 (TLGP), 86–90 (DGTTT), Gly413, 476–478 (NAA), and Asp492 contribute to the ATP site.

Belongs to the chaperonin (HSP60) family. Forms a cylinder of 14 subunits composed of two heptameric rings stacked back-to-back. Interacts with the co-chaperonin GroES.

It is found in the cytoplasm. The catalysed reaction is ATP + H2O + a folded polypeptide = ADP + phosphate + an unfolded polypeptide.. In terms of biological role, together with its co-chaperonin GroES, plays an essential role in assisting protein folding. The GroEL-GroES system forms a nano-cage that allows encapsulation of the non-native substrate proteins and provides a physical environment optimized to promote and accelerate protein folding. This is Chaperonin GroEL from Streptococcus equi subsp. zooepidemicus (strain MGCS10565).